We begin with the raw amino-acid sequence, 149 residues long: MNKGQRHIKIREIITNYEIETQDDLVDRLKSDGYNVTQATVSRDIKELHLVKVPLQDGRYKYSLPADQKFNPQQKLKRILTDSFISIDRTGNLVVMKAMPGNANAIAVLIDNLDWNELMGTICGDDTILIICRTERDGQVVTERFLNML.

The protein belongs to the ArgR family.

The protein resides in the cytoplasm. It functions in the pathway amino-acid biosynthesis; L-arginine biosynthesis [regulation]. In terms of biological role, regulates arginine biosynthesis genes. The chain is Arginine repressor from Shouchella clausii (strain KSM-K16) (Alkalihalobacillus clausii).